A 1486-amino-acid polypeptide reads, in one-letter code: Chromosome partition protein MukB (1486 aa).

34–41 (GGNGAGKS) contributes to the ATP binding site. Coiled-coil stretches lie at residues 326–418 (LEAD…QYNQ), 444–480 (LETF…QAYQ), and 509–603 (RHLA…RAPV). The tract at residues 666 to 783 (PGGSEDQRLN…EVPLFGRAAR (118 aa)) is flexible hinge. Coiled-coil stretches lie at residues 835–923 (EAEI…AKLE), 977–1115 (EMLS…TAKA), and 1209–1266 (VEAI…QNVS).

This sequence belongs to the SMC family. MukB subfamily. As to quaternary structure, homodimerization via its hinge domain. Binds to DNA via its C-terminal region. Interacts, and probably forms a ternary complex, with MukE and MukF via its C-terminal region. The complex formation is stimulated by calcium or magnesium. Interacts with tubulin-related protein FtsZ.

The protein localises to the cytoplasm. It is found in the nucleoid. Plays a central role in chromosome condensation, segregation and cell cycle progression. Functions as a homodimer, which is essential for chromosome partition. Involved in negative DNA supercoiling in vivo, and by this means organize and compact chromosomes. May achieve or facilitate chromosome segregation by condensation DNA from both sides of a centrally located replisome during cell division. This is Chromosome partition protein MukB from Escherichia coli O81 (strain ED1a).